A 182-amino-acid polypeptide reads, in one-letter code: Small ribosomal subunit protein uS4c (182 aa).

The disordered stretch occupies residues 12–31 (PGFTSKRPRSGSDLKNPLRS). The S4 RNA-binding domain maps to 82-143 (MRLDNILFRL…KQRSKALIQN (62 aa)).

The protein belongs to the universal ribosomal protein uS4 family. In terms of assembly, part of the 30S ribosomal subunit. Contacts protein S5. The interaction surface between S4 and S5 is involved in control of translational fidelity.

Its subcellular location is the plastid. The protein localises to the chloroplast. One of the primary rRNA binding proteins, it binds directly to 16S rRNA where it nucleates assembly of the body of the 30S subunit. Functionally, with S5 and S12 plays an important role in translational accuracy. The protein is Small ribosomal subunit protein uS4c (rps4) of Hymenocallis littoralis (Beach spider-lily).